Reading from the N-terminus, the 528-residue chain is MLNVPSQAFPAPGSQQRVSSQGRSKVPLKQGRSLMDWIRLTKSGKDLTGLKGGLIEVTEEELKKHNKKEDCWICIRGFVYNVSPYMEYHPGGEDELMRAAGADGTDLFNEVHRWVNYESMLKECLVGRMAVKPAVPKDCHEGKRVLNGMLPKSQMSDTLPRDVTDTLPREDLSSPSYDWFQTESSVTIVVYTKQKNISLDSVIVDLQDDSLRAEAVIKDHSYLVHVGLSHEVQENFSVRVIENVGKIEIVLQKKESVSWQCLGDHLEKHDSFIPKKDTGLYYRRCQLISKEDVTHDTRLFCLMLPPSTHLQVPVGQHVYLKLSVTGAEIVKPYTPVSDSLLSDFKEPVLSPNKYICFLIKIYPAGLFTPELDRLQIGDFISVSGPEGDFKVSKLQEVEDLFLLAAGTGFTPMVTVLNYALSHMSSLRKVKLMFFNKTEDDIIWRCQLEKLALREKRFDVEFVLSAPSPEWNGKQGHISRALLSEFLQRSSENSRAFLCICGPTPFTDEGIRLLHDLNFSDDEIHGFTA.

N-acetylmethionine is present on M1. The interval 1–29 (MLNVPSQAFPAPGSQQRVSSQGRSKVPLK) is disordered. Over residues 13–24 (GSQQRVSSQGRS) the composition is skewed to low complexity. In terms of domain architecture, Cytochrome b5 heme-binding spans 54-130 (LIEVTEEELK…LKECLVGRMA (77 aa)). Heme is bound by residues H89 and H112. The CS domain occupies 172-263 (LSSPSYDWFQ…KESVSWQCLG (92 aa)). Positions 280–392 (LYYRRCQLIS…SGPEGDFKVS (113 aa)) constitute an FAD-binding FR-type domain. FAD-binding positions include 372-387 (DRLQIGDFISVSGPEG) and 399-431 (DLFLLAAGTGFTPMVTVLNYALSHMSSLRKVKL).

The protein belongs to the flavoprotein pyridine nucleotide cytochrome reductase family. FAD serves as cofactor. As to expression, ubiquitously expressed. Isoform 2 is expressed in testis, brain, skeletal muscle and in the male germline.

The protein localises to the endoplasmic reticulum. The catalysed reaction is 2 Fe(III)-[cytochrome b5] + NADH = 2 Fe(II)-[cytochrome b5] + NAD(+) + H(+). In terms of biological role, NADH-cytochrome b5 reductase involved in endoplasmic reticulum stress response pathway. Plays a critical role in protecting pancreatic beta-cells against oxidant stress, possibly by protecting the cell from excess buildup of reactive oxygen species (ROS). The chain is Cytochrome b5 reductase 4 (Cyb5r4) from Mus musculus (Mouse).